Consider the following 343-residue polypeptide: MQEILIPLKEKSYKVFLGELPEIKLKQKALIISDSIVAGLHLPYLLERLNALEVRVCVIESGEKYKNFHSLERILNNAFEMQLNRHSLMIALGGGVISDMVGFASSIYFRGIDFINIPTTLLAQVDASVGGKTGINTPYGKNLIGSFHQPKAVYMDLAFLKTLEKREFQAGVAEIIKMAVCFDKNLVERLETKDLKDCLEEVIFQSVNIKAQVVVQDEKERNIRAGLNYGHTFGMLIENETNYERFLHGEAIAIGMRMANDLALSLGMLTLKEYERIENLLKKFDLIFNYQITDIQKFYERLFLDKKSENQTLKFILPKGVGAFEIASHIPKETILKVLEKWH.

NAD(+) is bound by residues 61 to 66, 95 to 99, 119 to 120, K132, K141, and 159 to 162; these read SGEKYK, GVISD, TT, and FLKT. Residues E174, H231, and H248 each coordinate Zn(2+).

This sequence belongs to the sugar phosphate cyclases superfamily. Dehydroquinate synthase family. NAD(+) is required as a cofactor. Co(2+) serves as cofactor. The cofactor is Zn(2+).

Its subcellular location is the cytoplasm. It catalyses the reaction 7-phospho-2-dehydro-3-deoxy-D-arabino-heptonate = 3-dehydroquinate + phosphate. Its pathway is metabolic intermediate biosynthesis; chorismate biosynthesis; chorismate from D-erythrose 4-phosphate and phosphoenolpyruvate: step 2/7. Catalyzes the conversion of 3-deoxy-D-arabino-heptulosonate 7-phosphate (DAHP) to dehydroquinate (DHQ). This Helicobacter pylori (strain J99 / ATCC 700824) (Campylobacter pylori J99) protein is 3-dehydroquinate synthase.